The sequence spans 296 residues: Nitrogenase iron protein (296 aa).

11 to 18 is an ATP binding site; sequence GKGGIGKS. Cys-99 is a binding site for [4Fe-4S] cluster. At Arg-102 the chain carries ADP-ribosylarginine; by dinitrogenase reductase ADP-ribosyltransferase. Cys-134 serves as a coordination point for [4Fe-4S] cluster.

This sequence belongs to the NifH/BchL/ChlL family. In terms of assembly, homodimer. The cofactor is [4Fe-4S] cluster. In terms of processing, the reversible ADP-ribosylation of Arg-102 inactivates the nitrogenase reductase and regulates nitrogenase activity.

It catalyses the reaction N2 + 8 reduced [2Fe-2S]-[ferredoxin] + 16 ATP + 16 H2O = H2 + 8 oxidized [2Fe-2S]-[ferredoxin] + 2 NH4(+) + 16 ADP + 16 phosphate + 6 H(+). The key enzymatic reactions in nitrogen fixation are catalyzed by the nitrogenase complex, which has 2 components: the iron protein and the molybdenum-iron protein. In Dechloromonas aromatica (strain RCB), this protein is Nitrogenase iron protein.